The chain runs to 268 residues: NADH-quinone oxidoreductase subunit B 1 (268 aa).

[4Fe-4S] cluster is bound by residues Cys42, Cys43, Cys108, and Cys138.

This sequence belongs to the complex I 20 kDa subunit family. In terms of assembly, NDH-1 is composed of 14 different subunits. Subunits NuoB, C, D, E, F, and G constitute the peripheral sector of the complex. It depends on [4Fe-4S] cluster as a cofactor.

It is found in the cell membrane. It catalyses the reaction a quinone + NADH + 5 H(+)(in) = a quinol + NAD(+) + 4 H(+)(out). In terms of biological role, NDH-1 shuttles electrons from NADH, via FMN and iron-sulfur (Fe-S) centers, to quinones in the respiratory chain. The immediate electron acceptor for the enzyme in this species is believed to be ubiquinone. Couples the redox reaction to proton translocation (for every two electrons transferred, four hydrogen ions are translocated across the cytoplasmic membrane), and thus conserves the redox energy in a proton gradient. This chain is NADH-quinone oxidoreductase subunit B 1, found in Roseiflexus sp. (strain RS-1).